We begin with the raw amino-acid sequence, 83 residues long: MELNLFKSDHSSSDDESSKPCCDLCMCTASMPPQCHCADIRLNSCHSACDRCACTRSMPGQCRCLDTTDFCYKPCKSSDEDDD.

Positions Met1–Lys7 are excised as a propeptide. Intrachain disulfides connect Cys21-Cys75, Cys22-Cys37, Cys25-Cys71, Cys27-Cys35, Cys45-Cys52, Cys49-Cys64, and Cys54-Cys62.

It belongs to the Bowman-Birk serine protease inhibitor family.

This is Bowman-Birk type proteinase inhibitor C-II from Glycine max (Soybean).